Reading from the N-terminus, the 436-residue chain is Glutamyl-tRNA reductase (436 aa).

Residues 49–52 (TCNR), S109, 114–116 (EPQ), and Q120 each bind substrate. The active-site Nucleophile is the C50. 189–194 (GAGEMC) contacts NADP(+).

It belongs to the glutamyl-tRNA reductase family. As to quaternary structure, homodimer.

The enzyme catalyses (S)-4-amino-5-oxopentanoate + tRNA(Glu) + NADP(+) = L-glutamyl-tRNA(Glu) + NADPH + H(+). Its pathway is porphyrin-containing compound metabolism; protoporphyrin-IX biosynthesis; 5-aminolevulinate from L-glutamyl-tRNA(Glu): step 1/2. Catalyzes the NADPH-dependent reduction of glutamyl-tRNA(Glu) to glutamate 1-semialdehyde (GSA). In Pelobacter propionicus (strain DSM 2379 / NBRC 103807 / OttBd1), this protein is Glutamyl-tRNA reductase.